The primary structure comprises 312 residues: Olfactory receptor 10K2 (312 aa).

Topologically, residues 1-25 are extracellular; the sequence is MERVNETVVREVIFLGFSSLARLQQ. Asn5 carries N-linked (GlcNAc...) asparagine glycosylation. Residues 26 to 46 traverse the membrane as a helical segment; the sequence is LLFVIFLLLYLFTLGTNAIII. Residues 47–54 lie on the Cytoplasmic side of the membrane; sequence STIVLDRA. A helical transmembrane segment spans residues 55–75; it reads LHIPMYFFLAILSCSEICYTF. Over 76-99 the chain is Extracellular; sequence IIVPKMLVDLLSQKKTISFLGCAI. The chain crosses the membrane as a helical span at residues 100–120; it reads QMFSFLFLGCSHSFLLAVMGY. The Cytoplasmic segment spans residues 121-139; sequence DRYIAICNPLRYSVLMGHG. A helical membrane pass occupies residues 140–160; it reads VCMGLVAAACACGFTVAQIIT. The Extracellular portion of the chain corresponds to 161-197; that stretch reads SLVFHLPFYSSNQLHHFFCDIAPVLKLASHHNHFSQI. Residues 198 to 217 traverse the membrane as a helical segment; the sequence is VIFMLCTLVLAIPLLLILVS. Topologically, residues 218–237 are cytoplasmic; the sequence is YVHILSAILQFPSTLGRCKA. The chain crosses the membrane as a helical span at residues 238–258; that stretch reads FSTCVSHLIIVTVHYGCASFI. The Extracellular portion of the chain corresponds to 259-271; that stretch reads YLRPQSNYSSSQD. Asn265 carries N-linked (GlcNAc...) asparagine glycosylation. A helical membrane pass occupies residues 272–292; sequence ALISVSYTIITPLFNPMIYSL. The Cytoplasmic portion of the chain corresponds to 293–312; that stretch reads RNKEFKSALCKIVRRTISLL.

It belongs to the G-protein coupled receptor 1 family.

It localises to the cell membrane. Its function is as follows. Odorant receptor. The polypeptide is Olfactory receptor 10K2 (OR10K2) (Homo sapiens (Human)).